Consider the following 213-residue polypeptide: Urease accessory protein UreG (213 aa).

Residue 10 to 17 participates in GTP binding; that stretch reads GPVGSGKT.

The protein belongs to the SIMIBI class G3E GTPase family. UreG subfamily. In terms of assembly, homodimer. UreD, UreF and UreG form a complex that acts as a GTP-hydrolysis-dependent molecular chaperone, activating the urease apoprotein by helping to assemble the nickel containing metallocenter of UreC. The UreE protein probably delivers the nickel.

The protein localises to the cytoplasm. Its function is as follows. Facilitates the functional incorporation of the urease nickel metallocenter. This process requires GTP hydrolysis, probably effectuated by UreG. This chain is Urease accessory protein UreG, found in Deinococcus radiodurans (strain ATCC 13939 / DSM 20539 / JCM 16871 / CCUG 27074 / LMG 4051 / NBRC 15346 / NCIMB 9279 / VKM B-1422 / R1).